We begin with the raw amino-acid sequence, 458 residues long: UDP-N-acetylmuramate--L-alanine ligase (458 aa).

115–121 serves as a coordination point for ATP; that stretch reads GSHGKTT.

It belongs to the MurCDEF family.

The protein resides in the cytoplasm. It catalyses the reaction UDP-N-acetyl-alpha-D-muramate + L-alanine + ATP = UDP-N-acetyl-alpha-D-muramoyl-L-alanine + ADP + phosphate + H(+). It participates in cell wall biogenesis; peptidoglycan biosynthesis. Cell wall formation. This Anaeromyxobacter dehalogenans (strain 2CP-C) protein is UDP-N-acetylmuramate--L-alanine ligase.